Consider the following 908-residue polypeptide: MADEDDGLQLNICYLQRVPKKEINSKAEEEAYFKENISNNNNFTNNRAYREKTNKNENNLNNNKNNNNNNNNNKTYNNNNSNNSYNNNNYNNNSFNNNNNNNYNNNNSNNNNNSNNNNLNKKPTFLEKKIQQEQKQKELKELKGPQHHRYRNQENEESNAIESNSNNFKDKYKFAENKTKKDEFNRPILETIESNIKVEKSETFSSMNWGSLQLSETLVRNLVGHMKHEKPTHIQEASITPILKGNDALVKAQTGSGKTLSYLIPVVQKLTEQRVTRSDGCYCVIITPTRELSSQIYEELQKLLKPFYWIVPGIIMGGENRSAEKARIRKGINILVATPGRLLDHLQNTQSFPTDNIKWCILDEADKLLDLGFEKDVTTIINLLDSKKRTMKFKRQNILVSATLSEGISRLASLSLTSPVYIGLDSKVLEKGENPFQAAEKEMLQAPKQLDQFYVEVESKERLTSLIAFIRWKTSNITIDKGDVASGNSSANSKMIVFFSSCDSVDFHHYMFSNMKMDKERGVKRTKKEQIKQDKLIQQHKQKNSKIFQTGNESDDEESDNDDSDDSDSNNSDSETDEEKEIEKQIKEATSNPNYRVKTSVFSVPIFKLHGELDQQTRTKTFFDFKNSPNGILLTTDVSARGLDLPSVNWIVQYDPCSDTKDYIHRIGRTARLGNQGCSLLFLLPSEKKYIDHLAKFNVSVKEMKVTTILQSLFYTSDGQLKKTSKSSQLESQVHDLQLLFERFLIYDSKAKEMARCAYQSFLRSYATHKADVKSIFHISYLHLGHVSKSFALRETPTELNKMSAGIKGAKAAKKGDEDTLQKQTADFKMKNYKSVNEFSDGLNDQPLQRANFHYESASGVIHNIYQRHFNRNERDEADKNSNPKEIKEKKRRLYDKKIESNKKFKSK.

Residues 55–165 are disordered; that stretch reads KNENNLNNNK…EESNAIESNS (111 aa). Over residues 56–122 the composition is skewed to low complexity; sequence NENNLNNNKN…NSNNNNLNKK (67 aa). Over residues 124–144 the composition is skewed to basic and acidic residues; the sequence is TFLEKKIQQEQKQKELKELKG. Residues 207-236 carry the Q motif motif; the sequence is MNWGSLQLSETLVRNLVGHMKHEKPTHIQE. Residues 239-422 form the Helicase ATP-binding domain; the sequence is ITPILKGNDA…SLSLTSPVYI (184 aa). 252–259 provides a ligand contact to ATP; it reads AQTGSGKT. The short motif at 363–366 is the DEAD box element; that stretch reads DEAD. Residues 518–738 form the Helicase C-terminal domain; sequence DKERGVKRTK…QLESQVHDLQ (221 aa). A compositionally biased stretch (basic and acidic residues) spans 519–537; sequence KERGVKRTKKEQIKQDKLI. Disordered regions lie at residues 519-590 and 872-908; these read KERG…KEAT and RNERDEADKNSNPKEIKEKKRRLYDKKIESNKKFKSK. Over residues 553–580 the composition is skewed to acidic residues; the sequence is ESDDEESDNDDSDDSDSNNSDSETDEEK. 2 stretches are compositionally biased toward basic and acidic residues: residues 872–889 and 896–908; these read RNERDEADKNSNPKEIKE and DKKIESNKKFKSK.

The protein belongs to the DEAD box helicase family. DDX31/DBP7 subfamily.

It localises to the nucleus. Its subcellular location is the nucleolus. It catalyses the reaction ATP + H2O = ADP + phosphate + H(+). In terms of biological role, may have DNA helicase activity and RNA helicase activity. Probably have ssDNA and RNA dependent ATPase activity. This chain is ATP-dependent DNA helicase DDX31 (ddx31), found in Dictyostelium discoideum (Social amoeba).